The primary structure comprises 183 residues: Peptide methionine sulfoxide reductase MsrA 1 (183 aa).

Residue C12 is part of the active site.

The protein belongs to the MsrA Met sulfoxide reductase family.

The catalysed reaction is L-methionyl-[protein] + [thioredoxin]-disulfide + H2O = L-methionyl-(S)-S-oxide-[protein] + [thioredoxin]-dithiol. It catalyses the reaction [thioredoxin]-disulfide + L-methionine + H2O = L-methionine (S)-S-oxide + [thioredoxin]-dithiol. Its function is as follows. Has an important function as a repair enzyme for proteins that have been inactivated by oxidation. Catalyzes the reversible oxidation-reduction of methionine sulfoxide in proteins to methionine. The polypeptide is Peptide methionine sulfoxide reductase MsrA 1 (msrA1) (Lactococcus lactis subsp. lactis (strain IL1403) (Streptococcus lactis)).